The following is a 444-amino-acid chain: MQLHSLIASTALLITSALAATSSSSSIPSSCTISSHATATAQSDLDKYSRCDTLVGNLTIGGGLKTGALANVKEINGSLTIFNATNLTSFAADSLESITDSLNLQSLTILTSASFGSLQSVDSIKLITLPAISSFTSNIKSANNIYISDTSLQSVDGFSALKKVNVFNVNNNKKLTSIKSPVETVSDSLQFSFNGNQTKITFDDLVWANNISLTDVHSVSFANLQKINSSLGFINNSISSLNFTKLNTIGQTFSIVSNDYLKNLSFSNLSTIGGALVVANNTGLQKIGGLDNLTTIGGTLEVVGNFTSLNLDSLKSVKGGADVESKSSNFSCNALKALQKKGGIKGESFVCKNGASSTSVKLSSTSKSQSSQTTAKVSKSSSKAEEKKFTSGDIKAAASASSVSSSSASSSSSKSSKGNAAIMAPIGQTTPLVGLLTAIIMSIM.

An N-terminal signal peptide occupies residues 1–19; sequence MQLHSLIASTALLITSALA. N-linked (GlcNAc...) asparagine glycans are attached at residues asparagine 57, asparagine 76, asparagine 83, asparagine 86, asparagine 196, asparagine 210, asparagine 228, asparagine 235, asparagine 242, asparagine 263, asparagine 268, asparagine 280, asparagine 292, asparagine 305, and asparagine 329. 2 stretches are compositionally biased toward low complexity: residues 359–381 and 395–417; these read SVKL…SKSS and KAAA…KSSK. The segment at 359–418 is disordered; it reads SVKLSSTSKSQSSQTTAKVSKSSSKAEEKKFTSGDIKAAASASSVSSSSASSSSSKSSKG. The GPI-anchor amidated asparagine moiety is linked to residue asparagine 419. Residues 420–444 constitute a propeptide, removed in mature form; sequence AAIMAPIGQTTPLVGLLTAIIMSIM.

This sequence belongs to the SPS2 family. Extensively N- and O-mannosylated.

Its subcellular location is the cell membrane. It localises to the secreted. The protein localises to the cell wall. Functionally, has a partially redundant function to ECM33 in cell wall integrity. May be involved in a repair mechanism activated in response to cell wall damage. The protein is Cell wall mannoprotein PST1 (PST1) of Saccharomyces cerevisiae (strain YJM789) (Baker's yeast).